The primary structure comprises 59 residues: Temporin-HN2 (59 aa).

The first 22 residues, 1 to 22 (MFTLKKSLLLLLFLGTINLSLS), serve as a signal peptide directing secretion. Residues 16–44 (TINLSLSEQERDAKEERRDEMDVEVEKRN) are a coiled coil. Residues 23 to 41 (EQERDAKEERRDEMDVEVE) constitute a propeptide that is removed on maturation. At Leu57 the chain carries Leucine amide.

Expressed by the skin glands.

It localises to the secreted. Functionally, has antimicrobial activity against some Gram-positive bacteria and fungi but has no activity against a range of Gram-negative bacteria except P.faecalis. Active against the Gram-positive bacteria S.aureus ATCC 25923 (MIC=4.8 uM), S.carnosus KHS (MIC=19 uM), B.licheniformis X39 (MIC=19 uM) and R.rhodochrous X15 (MIC=2.4 uM) but is inactive against E.faecium 091299 and E.faecalis 981. Has a less potent antimicrobial activity against the Gram-negative bacterium P.faecalis X29 (MIC=37.5 uM) and is inactive against E.coli, P.aeruginosa and S.typhi. Has antifungal activity against C.albicans ATCC 2002 (MIC=9.5 uM) and is also active against the slime mold 090223 (MIC=9.5 uM). Has extremely low hemolytic activity against human erythrocytes (LC(50)=300 uM). This is Temporin-HN2 from Odorrana hainanensis (Odor frog).